A 72-amino-acid polypeptide reads, in one-letter code: Cytochrome b-c1 complex subunit 9 (72 aa).

The Mitochondrial matrix portion of the chain corresponds to 1 to 27 (MESAARRSGGGVLEGFYRLVMRRTPVY). Residues 28 to 53 (VTFVIAGALLGERAVDYGVKTLWEKN) traverse the membrane as a helical segment. At 54–72 (NVGKRYEDISVLGQRPVDE) the chain is on the mitochondrial intermembrane side.

This sequence belongs to the UQCR10/QCR9 family. As to quaternary structure, component of the ubiquinol-cytochrome c oxidoreductase (cytochrome b-c1 complex, complex III, CIII), a multisubunit enzyme composed of 3 respiratory subunits cytochrome b, cytochrome c1 and Rieske protein, 2 core protein subunits, and additional low-molecular weight protein subunits. The complex exists as an obligatory dimer and forms supercomplexes (SCs) in the inner mitochondrial membrane with cytochrome c oxidase (complex IV, CIV).

It is found in the mitochondrion inner membrane. Its function is as follows. Component of the ubiquinol-cytochrome c oxidoreductase, a multisubunit transmembrane complex that is part of the mitochondrial electron transport chain which drives oxidative phosphorylation. The respiratory chain contains 3 multisubunit complexes succinate dehydrogenase (complex II, CII), ubiquinol-cytochrome c oxidoreductase (cytochrome b-c1 complex, complex III, CIII) and cytochrome c oxidase (complex IV, CIV), that cooperate to transfer electrons derived from NADH and succinate to molecular oxygen, creating an electrochemical gradient over the inner membrane that drives transmembrane transport and the ATP synthase. The cytochrome b-c1 complex catalyzes electron transfer from ubiquinol to cytochrome c, linking this redox reaction to translocation of protons across the mitochondrial inner membrane, with protons being carried across the membrane as hydrogens on the quinol. In the process called Q cycle, 2 protons are consumed from the matrix, 4 protons are released into the intermembrane space and 2 electrons are passed to cytochrome c. The polypeptide is Cytochrome b-c1 complex subunit 9 (Solanum tuberosum (Potato)).